A 232-amino-acid polypeptide reads, in one-letter code: uncharacterized protein (232 aa).

This is an uncharacterized protein from Homo sapiens (Human).